Reading from the N-terminus, the 204-residue chain is UPF0637 protein SAR1080 (204 aa).

This sequence belongs to the UPF0637 family.

The chain is UPF0637 protein SAR1080 from Staphylococcus aureus (strain MRSA252).